We begin with the raw amino-acid sequence, 292 residues long: Polyketide transferase af380 (292 aa).

Positions 46-267 (DVAVWFQQQG…FDLVAGRGHM (222 aa)) are abhydrolase domain.

The protein belongs to the polyketide transferase af380 family.

The enzyme catalyses fumagillol + dodecapentaneoyl-[polyketide synthase] = prefumagillin + holo-[polyketide synthase]. It participates in secondary metabolite biosynthesis; terpenoid biosynthesis. Polyketide transferase; part of the gene cluster that mediates the biosynthesis of fumagillin, a meroterpenoid that has numerous biological activities including irreversible inhibition of human type 2 methionine aminopeptidase (METAP2). Within the pathway, the polyketide transferase af380 catalyzes the transfer of a dodecapentaenoyl group synthesized by the polyketide synthase af370 onto 5R-hydroxy-seco-sesquiterpene to produce prefumagillin. The pathway begins with the conversion of farnesyl pyrophosphate (FPP) to beta-trans-bergamotene by the membrane-bound beta-trans-bergamotene synthase af520. The multifunctional cytochrome P450 monooxygenase af510 then converts beta-trans-bergamotene into 5-keto-demethoxyfumagillol via several oxydation steps. 5-keto-demethoxyfumagillol is then subjected to successive C-6 hydroxylation and O-methylation by the dioxygenase af480 and O-methyltransferase af390-400, respectively, to yield 5-keto-fumagillol, which is then stereoselectively reduced by the keto-reductase af490 to 5R-hydroxy-seco-sesquiterpene. The next step is the polyketide transferase af380-catalyzed transfer of a dodecapentaenoyl group synthesized by the polyketide synthase af370 onto 5R-hydroxy-seco-sesquiterpene which leads to the production of prefumagillin. Finally, oxidative cleavage by the monooxygenase af470 converts prefumagillin to fumagillin. In Aspergillus fumigatus (strain ATCC MYA-4609 / CBS 101355 / FGSC A1100 / Af293) (Neosartorya fumigata), this protein is Polyketide transferase af380.